The primary structure comprises 186 residues: Crossover junction endodeoxyribonuclease RuvC (186 aa).

Catalysis depends on residues D7, E67, and D140. Residues D7, E67, and D140 each coordinate Mg(2+).

The protein belongs to the RuvC family. In terms of assembly, homodimer which binds Holliday junction (HJ) DNA. The HJ becomes 2-fold symmetrical on binding to RuvC with unstacked arms; it has a different conformation from HJ DNA in complex with RuvA. In the full resolvosome a probable DNA-RuvA(4)-RuvB(12)-RuvC(2) complex forms which resolves the HJ. Requires Mg(2+) as cofactor.

Its subcellular location is the cytoplasm. It carries out the reaction Endonucleolytic cleavage at a junction such as a reciprocal single-stranded crossover between two homologous DNA duplexes (Holliday junction).. The RuvA-RuvB-RuvC complex processes Holliday junction (HJ) DNA during genetic recombination and DNA repair. Endonuclease that resolves HJ intermediates. Cleaves cruciform DNA by making single-stranded nicks across the HJ at symmetrical positions within the homologous arms, yielding a 5'-phosphate and a 3'-hydroxyl group; requires a central core of homology in the junction. The consensus cleavage sequence is 5'-(A/T)TT(C/G)-3'. Cleavage occurs on the 3'-side of the TT dinucleotide at the point of strand exchange. HJ branch migration catalyzed by RuvA-RuvB allows RuvC to scan DNA until it finds its consensus sequence, where it cleaves and resolves the cruciform DNA. This Chloroherpeton thalassium (strain ATCC 35110 / GB-78) protein is Crossover junction endodeoxyribonuclease RuvC.